The sequence spans 403 residues: Large ribosomal subunit protein uL3 (403 aa).

Residues 1 to 38 (MSHRKFSAPRHGSLGFLPRKRSSRHRGKVKSFPKDDSS) form a disordered region. A Phosphoserine modification is found at Ser-13. The segment covering 18–31 (PRKRSSRHRGKVKS) has biased composition (basic residues). Lys-39 is covalently cross-linked (Glycyl lysine isopeptide (Lys-Gly) (interchain with G-Cter in SUMO2)). The residue at position 136 (Lys-136) is an N6-acetyllysine. Residues Lys-224 and Lys-226 each participate in a glycyl lysine isopeptide (Lys-Gly) (interchain with G-Cter in SUMO2) cross-link. Residue His-245 is modified to Tele-methylhistidine. Lys-286 and Lys-294 each carry N6-acetyllysine; alternate. A Glycyl lysine isopeptide (Lys-Gly) (interchain with G-Cter in SUMO2); alternate cross-link involves residue Lys-286. Lys-294 is covalently cross-linked (Glycyl lysine isopeptide (Lys-Gly) (interchain with G-Cter in SUMO1); alternate). At Ser-304 the chain carries Phosphoserine. Lys-366 is subject to N6-acetyllysine; alternate. Residue Lys-366 forms a Glycyl lysine isopeptide (Lys-Gly) (interchain with G-Cter in SUMO2); alternate linkage. An N6-acetyllysine modification is found at Lys-373. Residues Lys-386, Lys-393, and Lys-399 each participate in a glycyl lysine isopeptide (Lys-Gly) (interchain with G-Cter in SUMO2) cross-link.

Belongs to the universal ribosomal protein uL3 family. Component of the large ribosomal subunit. Interacts with DHX33. Post-translationally, constitutively monomethylated at His-245 by METTL18. Methylation at His-245 regulates translation elongation by slowing ribosome traversal on tyrosine codons: slower elongation provides enough time for proper folding of synthesized proteins and prevents cellular aggregation of tyrosine-rich proteins It is not required for incorporation of RPL3 into ribosomes.

The protein resides in the nucleus. The protein localises to the nucleolus. Its subcellular location is the cytoplasm. In terms of biological role, component of the large ribosomal subunit. The ribosome is a large ribonucleoprotein complex responsible for the synthesis of proteins in the cell. The chain is Large ribosomal subunit protein uL3 (RPL3) from Bos taurus (Bovine).